The following is a 142-amino-acid chain: Probable histone H2AXb (142 aa).

Gly residues predominate over residues 1–12; sequence MSSGAGSGTTKG. The segment at 1–28 is disordered; the sequence is MSSGAGSGTTKGGRGKPKATKSVSRSSK. Serine 139 carries the phosphoserine; by ATM and ATR modification. The [ST]-Q motif motif lies at 139-140; it reads SQ.

The protein belongs to the histone H2A family. The nucleosome is a histone octamer containing two molecules each of H2A, H2B, H3 and H4 assembled in one H3-H4 heterotetramer and two H2A-H2B heterodimers. The octamer wraps approximately 147 bp of DNA. Interacts with numerous proteins required for DNA damage signaling and repair when phosphorylated on Ser-139. Post-translationally, phosphorylated to form H2AXS139ph (gamma-H2AX) in response to DNA double strand breaks (DSBs) generated by exogenous genotoxic agents and by stalled replication forks, and may also occur during meiotic recombination events. Phosphorylation can extend up to several thousand nucleosomes from the actual site of the DSB and may mark the surrounding chromatin for recruitment of proteins required for DNA damage signaling and repair. Widespread phosphorylation may also serve to amplify the damage signal or aid repair of persistent lesions. H2AXS139ph in response to ionizing radiation is mediated by ATM while defects in DNA replication induce H2AXS139ph subsequent to activation of ATR. Dephosphorylation of H2AXS139ph by PP2A is required for DNA DSB repair. Expressed in meristems and dividing cells.

Its subcellular location is the nucleus. The protein resides in the chromosome. Functionally, variant histone H2A which replaces conventional H2A in a subset of nucleosomes. Nucleosomes wrap and compact DNA into chromatin, limiting DNA accessibility to the cellular machineries which require DNA as a template. Histones thereby play a central role in transcription regulation, DNA repair, DNA replication and chromosomal stability. DNA accessibility is regulated via a complex set of post-translational modifications of histones, also called histone code, and nucleosome remodeling. Required for checkpoint-mediated arrest of cell cycle progression in response to low doses of ionizing radiation and for efficient repair of DNA double strand breaks (DSBs) specifically when modified by C-terminal phosphorylation. The sequence is that of Probable histone H2AXb from Arabidopsis thaliana (Mouse-ear cress).